The primary structure comprises 1537 residues: DNA (cytosine-5)-methyltransferase 1 (1537 aa).

The span at 1 to 13 shows a compositional bias: pro residues; sequence MPARSAPPPPALP. Disordered regions lie at residues 1-34 and 97-232; these read MPARSAPPPPALPPALRRRLRDLERDEDSLSEKE and RASN…DEKR. The region spanning 8-105 is the DMAP1-binding domain; it reads PPPALPPALR…SRASNGCAGN (98 aa). Residues 21-34 are compositionally biased toward basic and acidic residues; the sequence is RDLERDEDSLSEKE. Positions 129–154 are enriched in low complexity; it reads SSSSSSSSSSSSSSSSSSSSSLLPAP. Residues 171–194 are compositionally biased toward polar residues; the sequence is SPASSRVTRSSGRQPTILSVFSKG. Residues 182-194 are interaction with PCNA; it reads GRQPTILSVFSKG. Residues 215-227 are compositionally biased toward acidic residues; that stretch reads KDEEEEEELEEKE. Residues cysteine 263, cysteine 266, and histidine 329 each coordinate Zn(2+). Serine 420 is subject to Phosphoserine. The CXXC-type zinc finger occupies 558–604; that stretch reads NAMKRRRCGVCEVCQQPECGKCKACQNMVKFGGSGRSKQACLQRRCP. Cysteine 565, cysteine 568, cysteine 571, cysteine 576, cysteine 579, cysteine 582, cysteine 598, and cysteine 603 together coordinate Zn(2+). A disordered region spans residues 614-638; sequence DEEVDDNIPEMPSPKKMLQGRKKKQ. 2 BAH domains span residues 667–791 and 883–1011; these read ETLE…ETPP and HYRK…EDPP. The tract at residues 1006–1050 is disordered; that stretch reads SFEDPPNHARSSGNKGKGKGKGKGKGKGKSSTTCEQSEPEPTELK. Repeat copies occupy residues 1020 to 1021, 1022 to 1023, 1024 to 1025, 1026 to 1027, 1028 to 1029, 1030 to 1031, and 1032 to 1033. Positions 1020-1035 are 8 X 2 AA tandem repeats of K-G; that stretch reads KGKGKGKGKGKGKGKS. Basic residues predominate over residues 1021–1033; that stretch reads GKGKGKGKGKGKG. One copy of the 8; approximate repeat lies at 1034–1035; the sequence is KS. In terms of domain architecture, SAM-dependent MTase C5-type spans 1054–1513; it reads LRTLDVFSGC…LEIRACVGAR (460 aa). Residues serine 1061, 1065–1066, 1083–1084, 1105–1106, and cysteine 1106 contribute to the S-adenosyl-L-methionine site; these read GL, EM, and DC. The active site involves cysteine 1141. Asparagine 1492 and valine 1494 together coordinate S-adenosyl-L-methionine. Residues 1518–1537 form a disordered region; that stretch reads SGAAVAPPAPEKMEMTAAAD.

Belongs to the class I-like SAM-binding methyltransferase superfamily. C5-methyltransferase family. In terms of assembly, homodimer. Interacts with PCNA. Testis and lung.

It localises to the nucleus. The catalysed reaction is a 2'-deoxycytidine in DNA + S-adenosyl-L-methionine = a 5-methyl-2'-deoxycytidine in DNA + S-adenosyl-L-homocysteine + H(+). Methylates CpG residues. Preferentially methylates hemimethylated DNA. It is responsible for maintaining methylation patterns established in development. Mediates transcriptional repression by direct binding to HDAC2. Plays a role in promoter hypermethylation and transcriptional silencing of tumor suppressor genes (TSGs) or other tumor-related genes. Also required to maintain a transcriptionally repressive state of genes in undifferentiated embryonic stem cells (ESCs). Associates at promoter regions of tumor suppressor genes (TSGs) leading to their gene silencing. The sequence is that of DNA (cytosine-5)-methyltransferase 1 (DNMT1) from Gallus gallus (Chicken).